Consider the following 360-residue polypeptide: Phospho-N-acetylmuramoyl-pentapeptide-transferase (360 aa).

Helical transmembrane passes span 26 to 46 (AIVS…RMIA), 72 to 92 (PTMG…LWAY), 94 to 114 (SNPY…IGFV), 132 to 152 (WKYF…YLAG), 168 to 188 (VMPQ…VGTG), 199 to 219 (GLAI…AWAT), 236 to 256 (AGEL…FLWF), 263 to 283 (VFMG…IAVL), 288 to 308 (FLLV…ILQV), and 338 to 358 (VIVR…ATLK).

The protein belongs to the glycosyltransferase 4 family. MraY subfamily. Requires Mg(2+) as cofactor.

It localises to the cell inner membrane. It carries out the reaction UDP-N-acetyl-alpha-D-muramoyl-L-alanyl-gamma-D-glutamyl-meso-2,6-diaminopimeloyl-D-alanyl-D-alanine + di-trans,octa-cis-undecaprenyl phosphate = di-trans,octa-cis-undecaprenyl diphospho-N-acetyl-alpha-D-muramoyl-L-alanyl-D-glutamyl-meso-2,6-diaminopimeloyl-D-alanyl-D-alanine + UMP. It participates in cell wall biogenesis; peptidoglycan biosynthesis. Its function is as follows. Catalyzes the initial step of the lipid cycle reactions in the biosynthesis of the cell wall peptidoglycan: transfers peptidoglycan precursor phospho-MurNAc-pentapeptide from UDP-MurNAc-pentapeptide onto the lipid carrier undecaprenyl phosphate, yielding undecaprenyl-pyrophosphoryl-MurNAc-pentapeptide, known as lipid I. The protein is Phospho-N-acetylmuramoyl-pentapeptide-transferase of Enterobacter sp. (strain 638).